The sequence spans 344 residues: Tripartite motif-containing protein 44 (344 aa).

Disordered stretches follow at residues 1-25 (MASGVGAAFEELPHDGTCDECEPDE) and 66-165 (AWTP…EFDP). The span at 75-92 (GAGKEEAEVKVEQEREIE) shows a compositional bias: basic and acidic residues. Over residues 93–165 (SEAGEESESE…ETEAESEFDP (73 aa)) the composition is skewed to acidic residues. The B box-type zinc-finger motif lies at 174–215 (VAKRKCPDHGLDLSTYCQEDRQLICVLCPVIGAHQGHQLSTL). Residues Cys-179, His-182, Cys-201, and His-207 each coordinate Zn(2+). The stretch at 290–325 (AHVTEILADIQSHMDRLMTQMAQAKEQLDTSNESAE) forms a coiled coil. Positions 309 to 344 (QMAQAKEQLDTSNESAEPKAEGDEEGPSGASEEEDT) are disordered. Residues 330 to 344 (GDEEGPSGASEEEDT) are compositionally biased toward acidic residues. Residues Ser-336 and Ser-339 each carry the phosphoserine modification.

As to quaternary structure, interacts (via coiled coil) with TRIM17 (via coiled coil). As to expression, highly expressed in testis.

Its function is as follows. May play a role in the process of differentiation and maturation of neuronal cells. May regulate the activity of TRIM17. Is a negative regulator of PAX6 expression. This Homo sapiens (Human) protein is Tripartite motif-containing protein 44 (TRIM44).